We begin with the raw amino-acid sequence, 491 residues long: Cobyric acid synthase (491 aa).

The GATase cobBQ-type domain occupies 251–444 (GITIAVIRLP…LHGLFTNDEF (194 aa)). The active-site Nucleophile is the Cys-329. Residue His-436 is part of the active site.

This sequence belongs to the CobB/CobQ family. CobQ subfamily.

It functions in the pathway cofactor biosynthesis; adenosylcobalamin biosynthesis. Functionally, catalyzes amidations at positions B, D, E, and G on adenosylcobyrinic A,C-diamide. NH(2) groups are provided by glutamine, and one molecule of ATP is hydrogenolyzed for each amidation. The polypeptide is Cobyric acid synthase (Chloroflexus aggregans (strain MD-66 / DSM 9485)).